Consider the following 398-residue polypeptide: Succinate--CoA ligase [ADP-forming] subunit beta (398 aa).

The 245-residue stretch at 9–253 (KEILASYGVR…IREENPIEVE (245 aa)) folds into the ATP-grasp domain. ATP contacts are provided by residues Lys50, 57–59 (GRG), Val106, and Glu116. Residues Asn208 and Asp222 each contribute to the Mg(2+) site. Residues Asn273 and 330–332 (GIV) each bind substrate.

It belongs to the succinate/malate CoA ligase beta subunit family. In terms of assembly, heterotetramer of two alpha and two beta subunits. It depends on Mg(2+) as a cofactor.

The enzyme catalyses succinate + ATP + CoA = succinyl-CoA + ADP + phosphate. The catalysed reaction is GTP + succinate + CoA = succinyl-CoA + GDP + phosphate. It functions in the pathway carbohydrate metabolism; tricarboxylic acid cycle; succinate from succinyl-CoA (ligase route): step 1/1. Succinyl-CoA synthetase functions in the citric acid cycle (TCA), coupling the hydrolysis of succinyl-CoA to the synthesis of either ATP or GTP and thus represents the only step of substrate-level phosphorylation in the TCA. The beta subunit provides nucleotide specificity of the enzyme and binds the substrate succinate, while the binding sites for coenzyme A and phosphate are found in the alpha subunit. This is Succinate--CoA ligase [ADP-forming] subunit beta from Flavobacterium psychrophilum (strain ATCC 49511 / DSM 21280 / CIP 103535 / JIP02/86).